The sequence spans 357 residues: DnaJ homolog subfamily C member 25 (357 aa).

The chain crosses the membrane as a helical span at residues 19–39 (WLLLAPLLLVPLLARPAEALV). A J domain is found at 48–121 (DCYEVLGVSR…ETRKDYDYML (74 aa)). 2 helical membrane-spanning segments follow: residues 147 to 167 (VVIL…WWNS) and 241 to 261 (LLLF…AWYC).

Belongs to the DNAJC25 family.

It localises to the membrane. This Mus musculus (Mouse) protein is DnaJ homolog subfamily C member 25 (Dnajc25).